The primary structure comprises 167 residues: Gametocyte-specific factor 1 homolog (167 aa).

CHHC U11-48K-type zinc fingers lie at residues 1–28 (MVYC…RVIY) and 34–61 (LMVC…EDRN). C4, H10, H20, C24, C37, H43, H53, and C57 together coordinate Zn(2+). A compositionally biased stretch (basic and acidic residues) spans 128–161 (EKRRHFGEDYEEEKKPRKAKARADLRPTPYEHRR). The disordered stretch occupies residues 128 to 167 (EKRRHFGEDYEEEKKPRKAKARADLRPTPYEHRRPYSRRQ).

The protein belongs to the UPF0224 (FAM112) family. Interacts with piwi.

The protein localises to the nucleus. Acts via the piwi-interacting RNA (piRNA) pathway which mediates the repression of transposable elements during meiosis by forming complexes composed of piRNAs and piwi proteins and governs the methylation and subsequent repression of transposons. Required for repression of transposons and neighboring genes in ovarian somatic and germline cells. This chain is Gametocyte-specific factor 1 homolog, found in Drosophila melanogaster (Fruit fly).